The following is a 136-amino-acid chain: Histone H3 (136 aa).

Residues Met1 to Tyr42 form a disordered region. Lys5 is modified (N6-methylated lysine). Lys10 carries the N6-acetyllysine; alternate modification. Lys10 is subject to N6-methylated lysine; alternate. A Phosphoserine modification is found at Ser11. N6-acetyllysine is present on residues Lys15 and Lys24. Positions Ala22–Thr33 are enriched in low complexity. Residues Lys28, Lys37, and Lys80 each carry the N6-methylated lysine modification.

It belongs to the histone H3 family. As to quaternary structure, the nucleosome is a histone octamer containing two molecules each of H2A, H2B, H3 and H4 assembled in one H3-H4 heterotetramer and two H2A-H2B heterodimers. The octamer wraps approximately 147 bp of DNA. Acetylation is generally linked to gene activation. Post-translationally, methylation at Lys-5 is linked to gene activation. Methylation at Lys-10 is linked to gene repression.

The protein resides in the nucleus. It is found in the chromosome. Its function is as follows. Core component of nucleosome. Nucleosomes wrap and compact DNA into chromatin, limiting DNA accessibility to the cellular machineries which require DNA as a template. Histones thereby play a central role in transcription regulation, DNA repair, DNA replication and chromosomal stability. DNA accessibility is regulated via a complex set of post-translational modifications of histones, also called histone code, and nucleosome remodeling. The chain is Histone H3 from Acropora formosa (Staghorn coral).